Here is a 149-residue protein sequence, read N- to C-terminus: Probable calcium-binding protein CML25/26 (149 aa).

4 EF-hand domains span residues 1 to 35 (MASS…ALGE), 37 to 72 (VSEE…HQLQ), 77 to 113 (ESLR…LGSE), and 117 to 149 (LEME…MLMA). Residues D13, D15, D17, K19, E24, D50, D52, D54, and E61 each contribute to the Ca(2+) site. Positions 130, 132, 134, and 141 each coordinate Ca(2+).

Its function is as follows. Potential calcium sensor. This chain is Probable calcium-binding protein CML25/26 (CML25), found in Oryza sativa subsp. japonica (Rice).